The chain runs to 305 residues: Glutaminase (305 aa).

Substrate contacts are provided by serine 61, asparagine 113, glutamate 158, asparagine 165, tyrosine 189, tyrosine 241, and valine 259.

The protein belongs to the glutaminase family. As to quaternary structure, homotetramer.

It carries out the reaction L-glutamine + H2O = L-glutamate + NH4(+). The protein is Glutaminase of Alkaliphilus metalliredigens (strain QYMF).